Consider the following 434-residue polypeptide: [Pyruvate dehydrogenase (acetyl-transferring)] kinase isozyme 1, mitochondrial (434 aa).

The transit peptide at 1 to 26 (MRLARLLRGGTSVRPLCAVPCASRSL) directs the protein to the mitochondrion. At Y136 the chain carries Phosphotyrosine; by FGFR1. In terms of domain architecture, Histidine kinase spans 161 to 391 (TEYKESFGVD…DAVIYIKALS (231 aa)). Position 241 is a phosphotyrosine; by FGFR1, ABL1, FLT3 and JAK2 (Y241). Phosphotyrosine; by FGFR1 is present on Y242. ATP is bound by residues 277–284 (ELFKNAMR), D316, 335–336 (ST), and 352–357 (GFGYGL). T336 is subject to Phosphothreonine. Position 403 is an N6-succinyllysine (K403).

This sequence belongs to the PDK/BCKDK protein kinase family. Homodimer, and heterodimer with PDK2. Interacts with the pyruvate dehydrogenase complex subunit DLAT, and is part of the multimeric pyruvate dehydrogenase complex that contains multiple copies of pyruvate dehydrogenase (E1), dihydrolipoamide acetyltransferase (DLAT, E2) and lipoamide dehydrogenase (DLD, E3). Interacts with phosphoglycerate kinase PGK1; the interaction is direct, occurs under hypoxic conditions and leads to PDK1-mediated inhibition of pyruvate dehydrogenase complex activity. Post-translationally, phosphorylated by constitutively activated ABL1, FGFR1, FLT3 and JAK2 (in vitro), and this may also occur in cancer cells that express constitutively activated ABL1, FGFR1, FLT3 and JAK2. Phosphorylation at Tyr-241 and Tyr-242 strongly increases kinase activity, while phosphorylation at Tyr-136 has a lesser effect. Phosphorylated under hypoxic conditions at Thr-336 by phosphoglycerate kinase PGK1 which has an activating effect. In terms of tissue distribution, detected in pancreas islets (at protein level). Expressed predominantly in the heart.

The protein localises to the mitochondrion matrix. It carries out the reaction L-seryl-[pyruvate dehydrogenase E1 alpha subunit] + ATP = O-phospho-L-seryl-[pyruvate dehydrogenase E1 alpha subunit] + ADP + H(+). With respect to regulation, activated by binding to the pyruvate dehydrogenase complex subunit DLAT. Strongly activated by NADH plus acetyl-coenzyme A. Inhibited by dichloroacetate. In terms of biological role, kinase that plays a key role in regulation of glucose and fatty acid metabolism and homeostasis via phosphorylation of the pyruvate dehydrogenase subunits PDHA1 and PDHA2. This inhibits pyruvate dehydrogenase activity, and thereby regulates metabolite flux through the tricarboxylic acid cycle, down-regulates aerobic respiration and inhibits the formation of acetyl-coenzyme A from pyruvate. Plays an important role in cellular responses to hypoxia and is important for cell proliferation under hypoxia. The protein is [Pyruvate dehydrogenase (acetyl-transferring)] kinase isozyme 1, mitochondrial (Pdk1) of Rattus norvegicus (Rat).